The primary structure comprises 317 residues: Apolipoprotein E (317 aa).

An N-terminal signal peptide occupies residues 1–18 (MKVLWVALVITLLAGCQA). A run of 8 repeats spans residues 80-101 (VLMDETMKEVKAYREELEEQLG), 102-123 (PVAQETQARVSKELQAAQARLA), 124-145 (SDMQDVRGRLAQYRSEVQAMMG), 146-167 (HTTDELRDRLASHLRKLRKRLL), 168-189 (RDAEDLQKRLAVYRAGALEGSE), 190-211 (RSVSAIRERLGPLVEQGRARAA), 212-233 (TVGTLASQTLRERAEAWHQKLR), and 234-255 (GRVEEMGTQARDHLEEMREQLD). An 8 X 22 AA approximate tandem repeats region spans residues 80 to 255 (VLMDETMKEV…HLEEMREQLD (176 aa)). A Methionine sulfoxide modification is found at M143. The tract at residues 158-168 (HLRKLRKRLLR) is LDL and other lipoprotein receptors binding. Residue 162-165 (LRKR) coordinates heparin. Residues 210 to 290 (AATVGTLASQ…SWFEPLVEDM (81 aa)) are lipid-binding and lipoprotein association. 229–236 (HQKLRGRV) serves as a coordination point for heparin. The tract at residues 266 to 317 (TQMRLQAEAFQARLKSWFEPLVEDMQRQWAGLVEKVQLAMATSSTSAPSENH) is homooligomerization. The specificity for association with VLDL stretch occupies residues 278-290 (RLKSWFEPLVEDM).

Belongs to the apolipoprotein A1/A4/E family. In terms of assembly, homotetramer. May interact with ABCA1; functionally associated with ABCA1 in the biogenesis of HDLs. May interact with APP/A4 amyloid-beta peptide; the interaction is extremely stable in vitro but its physiological significance is unclear. May interact with MAPT. May interact with MAP2. In the cerebrospinal fluid, interacts with secreted SORL1. Interacts with PMEL; this allows the loading of PMEL luminal fragment on ILVs to induce fibril nucleation. APOE exists as multiple glycosylated and sialylated glycoforms within cells and in plasma. The extent of glycosylation and sialylation are tissue and context specific. In terms of processing, glycated in plasma VLDL. Post-translationally, phosphorylated by FAM20C in the extracellular medium.

The protein localises to the secreted. Its subcellular location is the extracellular space. The protein resides in the extracellular matrix. It is found in the extracellular vesicle. It localises to the endosome. The protein localises to the multivesicular body. In terms of biological role, APOE is an apolipoprotein, a protein associating with lipid particles, that mainly functions in lipoprotein-mediated lipid transport between organs via the plasma and interstitial fluids. APOE is a core component of plasma lipoproteins and is involved in their production, conversion and clearance. Apolipoproteins are amphipathic molecules that interact both with lipids of the lipoprotein particle core and the aqueous environment of the plasma. As such, APOE associates with chylomicrons, chylomicron remnants, very low density lipoproteins (VLDL) and intermediate density lipoproteins (IDL) but shows a preferential binding to high-density lipoproteins (HDL). It also binds a wide range of cellular receptors including the LDL receptor/LDLR and the very low-density lipoprotein receptor/VLDLR that mediate the cellular uptake of the APOE-containing lipoprotein particles. Finally, APOE also has a heparin-binding activity and binds heparan-sulfate proteoglycans on the surface of cells, a property that supports the capture and the receptor-mediated uptake of APOE-containing lipoproteins by cells. The polypeptide is Apolipoprotein E (APOE) (Physeter macrocephalus (Sperm whale)).